A 69-amino-acid polypeptide reads, in one-letter code: Photosystem I reaction center subunit IV (69 aa).

Belongs to the PsaE family.

The protein resides in the cellular thylakoid membrane. Its function is as follows. Stabilizes the interaction between PsaC and the PSI core, assists the docking of the ferredoxin to PSI and interacts with ferredoxin-NADP oxidoreductase. This Prochlorococcus marinus (strain MIT 9215) protein is Photosystem I reaction center subunit IV.